The sequence spans 311 residues: Ciliary microtubule inner protein 2B (311 aa).

2 disordered regions span residues 64–93 (PFPPAPRGHSYNEASQELGGRRRRQRLGDP) and 150–183 (QEGRQPQTEHEKQLLTARHRTPLPALSKEPAPFM).

Belongs to the CIMIP2 family. Expressed in airway epithelial cells.

The protein resides in the cytoplasm. The protein localises to the cytoskeleton. Its subcellular location is the cilium axoneme. Its function is as follows. Microtubule inner protein (MIP) part of the dynein-decorated doublet microtubules (DMTs) in cilia axoneme, which is required for motile cilia beating. This is Ciliary microtubule inner protein 2B (cimip2b) from Xenopus laevis (African clawed frog).